The following is a 244-amino-acid chain: Prolactin-7D1 (244 aa).

An N-terminal signal peptide occupies residues 1 to 30; that stretch reads MLPSLIQPCSSGTLLMLLMSNLFLWEKVSS. Intrachain disulfides connect cysteine 99–cysteine 215 and cysteine 232–cysteine 240.

This sequence belongs to the somatotropin/prolactin family.

The protein localises to the secreted. This Mus musculus (Mouse) protein is Prolactin-7D1 (Prl7d1).